A 469-amino-acid chain; its full sequence is Uronate isomerase (469 aa).

Belongs to the metallo-dependent hydrolases superfamily. Uronate isomerase family.

It carries out the reaction D-glucuronate = D-fructuronate. The catalysed reaction is aldehydo-D-galacturonate = keto-D-tagaturonate. It participates in carbohydrate metabolism; pentose and glucuronate interconversion. The sequence is that of Uronate isomerase from Corynebacterium efficiens (strain DSM 44549 / YS-314 / AJ 12310 / JCM 11189 / NBRC 100395).